The sequence spans 66 residues: Phylloseptin-H8 (66 aa).

The first 22 residues, 1–22, serve as a signal peptide directing secretion; that stretch reads MAFLKKSLFLVLFLGLVSLSIC. Positions 23–44 are excised as a propeptide; sequence EEEKRETEEEENDQEEDDKSEE. The segment at 25–44 is disordered; the sequence is EKRETEEEENDQEEDDKSEE. A compositionally biased stretch (acidic residues) spans 30 to 41; sequence EEEENDQEEDDK. Leu-65 carries the post-translational modification Leucine amide.

Expressed by the skin glands.

It is found in the secreted. In terms of biological role, has antimicrobial activity. This chain is Phylloseptin-H8, found in Pithecopus hypochondrialis (Orange-legged leaf frog).